The following is a 221-amino-acid chain: MAGFLSVVRRVYLTLYNWIVFAGWAQVLYLAITTLKETGYENVYDAIEKPLQLAQTAAVLEILHGLVGLVRSPVSATLPQIGSRLFLTWGILYSFPEVRSHFLVTSLVISWSITEIIRYSFFGFKEALGFAPSWHLWLRYSSFLLLYPTGITSEVGLIYLALPHIKTSEMYSVRMPNILNFSFDFFYATILVLAIYVPGSPHMYRYMLGQRKRALSKSKRE.

Over 1-11 the chain is Cytoplasmic; that stretch reads MAGFLSVVRRV. Residues 12–32 traverse the membrane as a helical segment; sequence YLTLYNWIVFAGWAQVLYLAI. Topologically, residues 33–51 are lumenal; the sequence is TTLKETGYENVYDAIEKPL. Residues 52–70 form a helical membrane-spanning segment; sequence QLAQTAAVLEILHGLVGLV. The Cytoplasmic portion of the chain corresponds to 71-76; sequence RSPVSA. The helical transmembrane segment at 77-95 threads the bilayer; sequence TLPQIGSRLFLTWGILYSF. The Lumenal segment spans residues 96–100; that stretch reads PEVRS. The helical transmembrane segment at 101–122 threads the bilayer; that stretch reads HFLVTSLVISWSITEIIRYSFF. The Cytoplasmic portion of the chain corresponds to 123 to 142; it reads GFKEALGFAPSWHLWLRYSS. Residues 143–165 form a helical membrane-spanning segment; sequence FLLLYPTGITSEVGLIYLALPHI. Catalysis depends on residues Y147 and E154. Residues 166-184 lie on the Lumenal side of the membrane; sequence KTSEMYSVRMPNILNFSFD. A helical transmembrane segment spans residues 185 to 204; sequence FFYATILVLAIYVPGSPHMY. The Cytoplasmic portion of the chain corresponds to 205–221; that stretch reads RYMLGQRKRALSKSKRE.

This sequence belongs to the very long-chain fatty acids dehydratase HACD family. As to quaternary structure, interacts with CDKA-1; but only with the 'Tyr-15' phosphorylated protein. Interacts with PAS1. Part of the fatty acid elongase complex which contains a beta-ketoacyl-CoA synthase (KCS), a beta-ketoacyl-CoA reductase (KCR), a beta-hydroxyacyl-CoA dehydratase (HCD) and an enoyl-CoA reductase (ECR). In terms of tissue distribution, high expression in young seedlings, roots, root tips, flowers and young siliques. Lower levels in leaves and stems.

It is found in the endoplasmic reticulum membrane. It localises to the cytoplasm. The protein resides in the nucleus. The enzyme catalyses a very-long-chain (3R)-3-hydroxyacyl-CoA = a very-long-chain (2E)-enoyl-CoA + H2O. The protein operates within lipid metabolism; fatty acid biosynthesis. Catalyzes the third of the four reactions of the long-chain fatty acids elongation cycle. This endoplasmic reticulum-bound enzymatic process, allows the addition of two carbons to the chain of long- and very long-chain fatty acids/VLCFAs per cycle. This enzyme catalyzes the dehydration of the 3-hydroxyacyl-CoA intermediate into trans-2,3-enoyl-CoA, within each cycle of fatty acid elongation. Thereby, it participates in the production of VLCFAs of different chain lengths that are involved in multiple biological processes as precursors of membrane lipids and lipid mediators. May be an anti-phosphatase that prevents CDKA-1 dephosphorylation and activation. Involved in the hormonal control of cell division and differentiation. Required for proliferation control of meristematic and non-meristematic cells. Negative regulator of the cell cycle. The protein is Very-long-chain (3R)-3-hydroxyacyl-CoA dehydratase PASTICCINO 2 (PAS2) of Arabidopsis thaliana (Mouse-ear cress).